The sequence spans 373 residues: Chaperone protein DnaJ (373 aa).

Residues 4 to 69 (SYYEILEITQ…EKRAIYDRYG (66 aa)) enclose the J domain. The CR-type zinc-finger motif lies at 135–212 (GCKKNIDFTY…CKGLGYNESK (78 aa)). Zn(2+) is bound by residues C148, C151, C164, C167, C186, C189, C200, and C203. CXXCXGXG motif repeat units follow at residues 148–155 (CKTCNGTG), 164–171 (CPKCQGRG), 186–193 (CPDCQGIG), and 200–207 (CSDCKGLG).

It belongs to the DnaJ family. Homodimer. The cofactor is Zn(2+).

Its subcellular location is the cytoplasm. Its function is as follows. Participates actively in the response to hyperosmotic and heat shock by preventing the aggregation of stress-denatured proteins and by disaggregating proteins, also in an autonomous, DnaK-independent fashion. Unfolded proteins bind initially to DnaJ; upon interaction with the DnaJ-bound protein, DnaK hydrolyzes its bound ATP, resulting in the formation of a stable complex. GrpE releases ADP from DnaK; ATP binding to DnaK triggers the release of the substrate protein, thus completing the reaction cycle. Several rounds of ATP-dependent interactions between DnaJ, DnaK and GrpE are required for fully efficient folding. Also involved, together with DnaK and GrpE, in the DNA replication of plasmids through activation of initiation proteins. The sequence is that of Chaperone protein DnaJ from Campylobacter jejuni (strain RM1221).